Here is a 502-residue protein sequence, read N- to C-terminus: Medium/long-chain-fatty-acid--CoA ligase FadD17 (502 aa).

This sequence belongs to the ATP-dependent AMP-binding enzyme family.

The enzyme catalyses a medium-chain fatty acid + ATP + CoA = a medium-chain fatty acyl-CoA + AMP + diphosphate. The catalysed reaction is a long-chain fatty acid + ATP + CoA = a long-chain fatty acyl-CoA + AMP + diphosphate. It functions in the pathway lipid metabolism; fatty acid biosynthesis. Catalyzes the activation of medium/long-chain fatty acids as acyl-coenzyme A (acyl-CoA), which are then transferred to the multifunctional polyketide synthase (PKS) type III for further chain extension. In Mycobacterium bovis (strain ATCC BAA-935 / AF2122/97), this protein is Medium/long-chain-fatty-acid--CoA ligase FadD17 (fadD17).